The sequence spans 1625 residues: E3 ubiquitin-protein ligase KEG (1625 aa).

Residues 10-56 form an RING-type zinc finger; sequence CSVCHTRYNEDERVPLLLQCGHGFCKDCLSKMFSTSSDTTLTCPRCR. Residues 91–106 show a composition bias toward acidic residues; sequence YTDDEDDDDEEDGSDE. A disordered region spans residues 91-110; sequence YTDDEDDDDEEDGSDEDGAR. Positions 141 to 427 constitute a Protein kinase domain; it reads RQIGEESSSG…TFNAMLATFL (287 aa). ATP contacts are provided by residues 147–155 and Lys176; that span reads SSSGGFGGV. ANK repeat units lie at residues 467–496, 510–540, 544–573, 579–608, 612–641, 647–676, 685–720, 725–754, 758–787, 791–826, and 832–863; these read DNPN…AGGG, DGQS…NVDI, DGDP…NVRS, SGPS…DPNA, EGET…SRSM, KCLT…PEEI, PVGT…DPTA, HGRT…NANI, HNTI…DCNI, EGDN…AVDV, and KTVR…HLSP.

As to quaternary structure, interacts with ABI5 and EDR1. Autophosphotylated and autoubiquitinated in vitro. Post-translationally, phosphorylation enhances self-ubiquitination. In terms of processing, autoubiquitinated in response to abscisic acid (ABA) and subsequently targeted to proteolysis. As to expression, expressed in all tissues of young seedlings. In flowering plants, only detected in the youngest part of the stem, anthers and the receptacle of immature siliques. Not found in mature leave, older parts of the stem, flower parts other than anthers or mature siliques.

It is found in the golgi apparatus. It localises to the trans-Golgi network. The protein resides in the early endosome. It carries out the reaction L-seryl-[protein] + ATP = O-phospho-L-seryl-[protein] + ADP + H(+). The catalysed reaction is L-threonyl-[protein] + ATP = O-phospho-L-threonyl-[protein] + ADP + H(+). The enzyme catalyses S-ubiquitinyl-[E2 ubiquitin-conjugating enzyme]-L-cysteine + [acceptor protein]-L-lysine = [E2 ubiquitin-conjugating enzyme]-L-cysteine + N(6)-ubiquitinyl-[acceptor protein]-L-lysine.. It functions in the pathway protein modification; protein ubiquitination. Functionally, mediates E2-dependent protein ubiquitination. Acts as a negative regulator of abscisic acid signaling. Required for ABI5 degradation, by mediating its ubiquitination. Together with EDR1, may regulate endocytic trafficking and/or the formation of signaling complexes on trans-Golgi network (TGN)/ early endosome (EE) vesicles during stress responses. The polypeptide is E3 ubiquitin-protein ligase KEG (KEG) (Arabidopsis thaliana (Mouse-ear cress)).